Here is a 275-residue protein sequence, read N- to C-terminus: Phosphatidylglycerol--prolipoprotein diacylglyceryl transferase (275 aa).

Helical transmembrane passes span 22-42, 61-81, 96-116, 125-145, 177-197, 204-224, and 238-258; these read LSVR…MWLA, LLFY…VLFY, IWTG…AMIW, FFTV…VGRI, SQLY…NLFW, GAIS…VEFV, and ISMG…MVWA. Position 144 (arginine 144) interacts with a 1,2-diacyl-sn-glycero-3-phospho-(1'-sn-glycerol).

Belongs to the Lgt family.

It localises to the cell inner membrane. It carries out the reaction L-cysteinyl-[prolipoprotein] + a 1,2-diacyl-sn-glycero-3-phospho-(1'-sn-glycerol) = an S-1,2-diacyl-sn-glyceryl-L-cysteinyl-[prolipoprotein] + sn-glycerol 1-phosphate + H(+). Its pathway is protein modification; lipoprotein biosynthesis (diacylglyceryl transfer). In terms of biological role, catalyzes the transfer of the diacylglyceryl group from phosphatidylglycerol to the sulfhydryl group of the N-terminal cysteine of a prolipoprotein, the first step in the formation of mature lipoproteins. This Aeromonas salmonicida (strain A449) protein is Phosphatidylglycerol--prolipoprotein diacylglyceryl transferase.